A 490-amino-acid chain; its full sequence is Pup--protein ligase (490 aa).

Position 9 (Glu9) interacts with Mg(2+). Residue Arg53 coordinates ATP. A Mg(2+)-binding site is contributed by Tyr55. The active-site Proton acceptor is Asp57. Glu63 lines the Mg(2+) pocket. Position 66 (Ser66) interacts with ATP. A disordered region spans residues 160–181; the sequence is KTHPNGGPVPGSTDPASSTGVP. Residue Trp441 coordinates ATP.

This sequence belongs to the Pup ligase/Pup deamidase family. Pup-conjugating enzyme subfamily.

It carries out the reaction ATP + [prokaryotic ubiquitin-like protein]-L-glutamate + [protein]-L-lysine = ADP + phosphate + N(6)-([prokaryotic ubiquitin-like protein]-gamma-L-glutamyl)-[protein]-L-lysine.. Its pathway is protein degradation; proteasomal Pup-dependent pathway. It participates in protein modification; protein pupylation. Its function is as follows. Catalyzes the covalent attachment of the prokaryotic ubiquitin-like protein modifier Pup to the proteasomal substrate proteins, thereby targeting them for proteasomal degradation. This tagging system is termed pupylation. The ligation reaction involves the side-chain carboxylate of the C-terminal glutamate of Pup and the side-chain amino group of a substrate lysine. This is Pup--protein ligase from Rothia mucilaginosa (strain DY-18) (Stomatococcus mucilaginosus).